A 190-amino-acid polypeptide reads, in one-letter code: Surfactant protein C (190 aa).

Residues 1-23 constitute a propeptide that is removed on maturation; the sequence is MDVGSKEVLIENPPDYSAAPQGR. A lipid anchor (S-palmitoyl cysteine) is attached at cysteine 28. Positions 59–190 are excised as a propeptide; the sequence is HMSQKHTEMV…LCGEVPLYYI (132 aa). A BRICHOS domain is found at 94–190; it reads FSIGSTGIVV…LCGEVPLYYI (97 aa). An intrachain disulfide couples cysteine 121 to cysteine 182.

It localises to the secreted. Its subcellular location is the extracellular space. The protein resides in the surface film. Its function is as follows. Pulmonary surfactant associated proteins promote alveolar stability by lowering the surface tension at the air-liquid interface in the peripheral air spaces. This Neovison vison (American mink) protein is Surfactant protein C (SFTPC).